The chain runs to 517 residues: Salicyloyl-CoA 5-hydroxylase (517 aa).

The protein belongs to the aromatic-ring hydroxylase family. KMO subfamily.

It catalyses the reaction 2-hydroxybenzoyl-CoA + NADH + O2 + H(+) = 2,5-dihydroxybenzoyl-CoA + NAD(+) + H2O. In terms of biological role, involved in the degradation of salicylate via a pathway involving coenzyme A derivative. Catalyzes the aromatic hydroxylation of salicylyl-CoA to yield gentisyl-CoA. The protein is Salicyloyl-CoA 5-hydroxylase of Streptomyces sp.